The primary structure comprises 368 residues: Outer membrane protein assembly factor BamC (368 aa).

A signal peptide spans M1–A18. A lipid anchor (N-palmitoyl cysteine) is attached at C19. C19 carries the S-diacylglycerol cysteine lipid modification.

This sequence belongs to the BamC family. Part of the Bam complex.

It localises to the cell outer membrane. Functionally, part of the outer membrane protein assembly complex, which is involved in assembly and insertion of beta-barrel proteins into the outer membrane. The polypeptide is Outer membrane protein assembly factor BamC (Pseudoalteromonas atlantica (strain T6c / ATCC BAA-1087)).